Consider the following 191-residue polypeptide: Gamma-glutamylaminecyclotransferase B (191 aa).

7 to 10 (YGTL) is a binding site for substrate. Catalysis depends on E82, which acts as the Proton acceptor. Polar residues predominate over residues 155–178 (SADFSQNSEQEIKKNNSLQILTST). The interval 155–191 (SADFSQNSEQEIKKNNSLQILTSTGDDHDVNFRGPLQ) is disordered.

It belongs to the gamma-glutamylcyclotransferase family.

The enzyme catalyses epsilon-(gamma-L-glutamyl)-L-lysine = 5-oxo-L-proline + L-lysine. Functionally, may contribute to degradation of proteins cross-linked by transglutaminases by degrading the cross-link between a lysine and a glutamic acid residue. Catalyzes the formation of 5-oxo-L-proline from L-gamma-glutamyl-L-epsilon-lysine. The sequence is that of Gamma-glutamylaminecyclotransferase B (ggact.2) from Danio rerio (Zebrafish).